Reading from the N-terminus, the 118-residue chain is Large ribosomal subunit protein bL21c (118 aa).

The protein belongs to the bacterial ribosomal protein bL21 family. Part of the 50S ribosomal subunit.

It is found in the plastid. It localises to the chloroplast. Functionally, this protein binds to 23S rRNA. The polypeptide is Large ribosomal subunit protein bL21c (Zygnema circumcarinatum (Green alga)).